The sequence spans 368 residues: tRNA/tmRNA (uracil-C(5))-methyltransferase (368 aa).

Gln-190, Tyr-218, Asn-223, Glu-239, and Asp-301 together coordinate S-adenosyl-L-methionine. Cys-326 (nucleophile) is an active-site residue. Glu-360 functions as the Proton acceptor in the catalytic mechanism.

This sequence belongs to the class I-like SAM-binding methyltransferase superfamily. RNA M5U methyltransferase family. TrmA subfamily.

It catalyses the reaction uridine(54) in tRNA + S-adenosyl-L-methionine = 5-methyluridine(54) in tRNA + S-adenosyl-L-homocysteine + H(+). It carries out the reaction uridine(341) in tmRNA + S-adenosyl-L-methionine = 5-methyluridine(341) in tmRNA + S-adenosyl-L-homocysteine + H(+). Functionally, dual-specificity methyltransferase that catalyzes the formation of 5-methyluridine at position 54 (m5U54) in all tRNAs, and that of position 341 (m5U341) in tmRNA (transfer-mRNA). This Photobacterium profundum (strain SS9) protein is tRNA/tmRNA (uracil-C(5))-methyltransferase.